The sequence spans 185 residues: Crossover junction endodeoxyribonuclease RuvC (185 aa).

Residues D7, E68, and D141 contribute to the active site. Residues D7, E68, and D141 each contribute to the Mg(2+) site.

The protein belongs to the RuvC family. In terms of assembly, homodimer which binds Holliday junction (HJ) DNA. The HJ becomes 2-fold symmetrical on binding to RuvC with unstacked arms; it has a different conformation from HJ DNA in complex with RuvA. In the full resolvosome a probable DNA-RuvA(4)-RuvB(12)-RuvC(2) complex forms which resolves the HJ. Mg(2+) is required as a cofactor.

The protein localises to the cytoplasm. It carries out the reaction Endonucleolytic cleavage at a junction such as a reciprocal single-stranded crossover between two homologous DNA duplexes (Holliday junction).. Functionally, the RuvA-RuvB-RuvC complex processes Holliday junction (HJ) DNA during genetic recombination and DNA repair. Endonuclease that resolves HJ intermediates. Cleaves cruciform DNA by making single-stranded nicks across the HJ at symmetrical positions within the homologous arms, yielding a 5'-phosphate and a 3'-hydroxyl group; requires a central core of homology in the junction. The consensus cleavage sequence is 5'-(A/T)TT(C/G)-3'. Cleavage occurs on the 3'-side of the TT dinucleotide at the point of strand exchange. HJ branch migration catalyzed by RuvA-RuvB allows RuvC to scan DNA until it finds its consensus sequence, where it cleaves and resolves the cruciform DNA. This Helicobacter hepaticus (strain ATCC 51449 / 3B1) protein is Crossover junction endodeoxyribonuclease RuvC.